Reading from the N-terminus, the 421-residue chain is Phosphoribosylamine--glycine ligase (421 aa).

An ATP-grasp domain is found at Lys108–Met314. Ile134–Ser195 serves as a coordination point for ATP. Residues Glu284 and Asn286 each contribute to the Mg(2+) site.

It belongs to the GARS family. Mg(2+) is required as a cofactor. The cofactor is Mn(2+).

The enzyme catalyses 5-phospho-beta-D-ribosylamine + glycine + ATP = N(1)-(5-phospho-beta-D-ribosyl)glycinamide + ADP + phosphate + H(+). It participates in purine metabolism; IMP biosynthesis via de novo pathway; N(1)-(5-phospho-D-ribosyl)glycinamide from 5-phospho-alpha-D-ribose 1-diphosphate: step 2/2. This chain is Phosphoribosylamine--glycine ligase, found in Streptococcus pyogenes serotype M18 (strain MGAS8232).